Reading from the N-terminus, the 391-residue chain is MGEENQPNYTISQENWSLHRKGYDDQQRHQEKVQEAIKNNLPDLVTEESIVMSNGKDVVKIPIRSLDEYKIRYNYDKNKHVGQGNGDSKVGDVVARDGSGGQKQKGPGKGQGAGDAAGEDYYEAEVSILELEQAFFRELELPNLKRKEMDENRIEHVEFNDIRKTGLWGNIDKKRTMISAYKRNAMSGKASFHPIHQEDLKFRTWNEVLKPDSKAVVLAMMDTSGSMGIWEKYMARSFFFWMTRFLRTKYETVDIEFIAHHTEAKVVTEEEFFSKGESGGTICSSVYKKALELIDNKYSPDRYNIYPFHFSDGDNLTSDNARCVKLVEELMKKCNMFGYGEVNQYNRHSTLMSAYKNIKDDNFRYYILKQKADVFHAMKSFFREESGEKMA.

Residues Met-1–Trp-16 show a composition bias toward polar residues. Disordered stretches follow at residues Met-1–Glu-31 and His-80–Ala-117. Residues Lys-21 to Glu-31 show a composition bias toward basic and acidic residues. Over residues Gly-98–Asp-115 the composition is skewed to gly residues.

It belongs to the UPF0229 family.

In Bacillus cereus (strain B4264), this protein is UPF0229 protein BCB4264_A0587.